The sequence spans 71 residues: Vitellogenin-B2 (71 aa).

The signal sequence occupies residues 1-15 (MRGIILALLLALAGC). A Vitellogenin domain is found at 24–71 (FSESKTYVYNYEGIILNGIPENGLARSGIKLNCKVELSGYAQRSYMLK).

In terms of tissue distribution, produced by the liver, secreted into the blood and then sequestered by receptor mediated endocytosis into growing oocytes, where it is generally cleaved, giving rise to the respective yolk components.

Its function is as follows. Precursor of the major egg-yolk proteins that are sources of nutrients during early development of oviparous organisms. In Xenopus laevis (African clawed frog), this protein is Vitellogenin-B2.